We begin with the raw amino-acid sequence, 393 residues long: Demethylspheroidene O-methyltransferase (393 aa).

The disordered stretch occupies residues 1–36; the sequence is MPKDDHTGATADRTAQPTGTGKQPLVPGQPGAAPVQ. Positions 26 to 36 are enriched in low complexity; sequence VPGQPGAAPVQ. Residues Asp-259 and Arg-297 each contribute to the S-adenosyl-L-methionine site.

Belongs to the class I-like SAM-binding methyltransferase superfamily. Cation-independent O-methyltransferase family.

The catalysed reaction is demethylspheroidene + S-adenosyl-L-methionine = spheroidene + S-adenosyl-L-homocysteine + H(+). It functions in the pathway carotenoid biosynthesis; spheroidene biosynthesis. Functionally, methyltransferase that mediates the O-methylation of 1-hydroxy carotenoids. Converts hydroxyneurosporene to methoxyneurosporene or demethylspheroidene to spheroidene. Also able to produce spirilloxanthin. The chain is Demethylspheroidene O-methyltransferase (crtF) from Rhodobacter capsulatus (strain ATCC BAA-309 / NBRC 16581 / SB1003).